The primary structure comprises 213 residues: NADH-quinone oxidoreductase subunit I (213 aa).

4Fe-4S ferredoxin-type domains are found at residues 74–103 (RFIE…METS) and 113–142 (ENYS…HGTE). [4Fe-4S] cluster is bound by residues C83, C86, C89, C93, C122, C125, C128, and C132.

Belongs to the complex I 23 kDa subunit family. NDH-1 is composed of 14 different subunits. Subunits NuoA, H, J, K, L, M, N constitute the membrane sector of the complex. Requires [4Fe-4S] cluster as cofactor.

The protein resides in the cell inner membrane. It catalyses the reaction a quinone + NADH + 5 H(+)(in) = a quinol + NAD(+) + 4 H(+)(out). In terms of biological role, NDH-1 shuttles electrons from NADH, via FMN and iron-sulfur (Fe-S) centers, to quinones in the respiratory chain. The immediate electron acceptor for the enzyme in this species is believed to be ubiquinone. Couples the redox reaction to proton translocation (for every two electrons transferred, four hydrogen ions are translocated across the cytoplasmic membrane), and thus conserves the redox energy in a proton gradient. The sequence is that of NADH-quinone oxidoreductase subunit I from Campylobacter jejuni subsp. jejuni serotype O:23/36 (strain 81-176).